A 153-amino-acid chain; its full sequence is Superoxide dismutase [Cu-Zn] (153 aa).

His-45, His-47, and His-62 together coordinate Cu cation. An intrachain disulfide couples Cys-56 to Cys-145. The Zn(2+) site is built by His-62, His-70, His-79, and Asp-82. His-119 lines the Cu cation pocket.

It belongs to the Cu-Zn superoxide dismutase family. Homodimer. It depends on Cu cation as a cofactor. Requires Zn(2+) as cofactor.

The protein localises to the cytoplasm. It carries out the reaction 2 superoxide + 2 H(+) = H2O2 + O2. In terms of biological role, destroys radicals which are normally produced within the cells and which are toxic to biological systems. The polypeptide is Superoxide dismutase [Cu-Zn] (Drosophila yakuba (Fruit fly)).